The primary structure comprises 117 residues: uncharacterized protein (117 aa).

This is an uncharacterized protein from Acheta domesticus (House cricket).